A 287-amino-acid polypeptide reads, in one-letter code: ATP synthase gamma chain (287 aa).

It belongs to the ATPase gamma chain family. F-type ATPases have 2 components, CF(1) - the catalytic core - and CF(0) - the membrane proton channel. CF(1) has five subunits: alpha(3), beta(3), gamma(1), delta(1), epsilon(1). CF(0) has three main subunits: a, b and c.

The protein localises to the cell inner membrane. Produces ATP from ADP in the presence of a proton gradient across the membrane. The gamma chain is believed to be important in regulating ATPase activity and the flow of protons through the CF(0) complex. The polypeptide is ATP synthase gamma chain (Baumannia cicadellinicola subsp. Homalodisca coagulata).